Here is a 194-residue protein sequence, read N- to C-terminus: Holliday junction branch migration complex subunit RuvA (194 aa).

The tract at residues methionine 1–lysine 61 is domain I. Residues threonine 62–methionine 139 are domain II. A flexible linker region spans residues methionine 139–leucine 143. Residues glutamate 144–lysine 194 form a domain III region.

It belongs to the RuvA family. As to quaternary structure, homotetramer. Forms an RuvA(8)-RuvB(12)-Holliday junction (HJ) complex. HJ DNA is sandwiched between 2 RuvA tetramers; dsDNA enters through RuvA and exits via RuvB. An RuvB hexamer assembles on each DNA strand where it exits the tetramer. Each RuvB hexamer is contacted by two RuvA subunits (via domain III) on 2 adjacent RuvB subunits; this complex drives branch migration. In the full resolvosome a probable DNA-RuvA(4)-RuvB(12)-RuvC(2) complex forms which resolves the HJ.

Its subcellular location is the cytoplasm. The RuvA-RuvB-RuvC complex processes Holliday junction (HJ) DNA during genetic recombination and DNA repair, while the RuvA-RuvB complex plays an important role in the rescue of blocked DNA replication forks via replication fork reversal (RFR). RuvA specifically binds to HJ cruciform DNA, conferring on it an open structure. The RuvB hexamer acts as an ATP-dependent pump, pulling dsDNA into and through the RuvAB complex. HJ branch migration allows RuvC to scan DNA until it finds its consensus sequence, where it cleaves and resolves the cruciform DNA. This Oenococcus oeni (strain ATCC BAA-331 / PSU-1) protein is Holliday junction branch migration complex subunit RuvA.